Consider the following 281-residue polypeptide: 3-hydroxybutyryl-CoA dehydrogenase (281 aa).

It belongs to the 3-hydroxyacyl-CoA dehydrogenase family.

It carries out the reaction (3S)-3-hydroxybutanoyl-CoA + NADP(+) = acetoacetyl-CoA + NADPH + H(+). Its pathway is lipid metabolism; butanoate metabolism. This chain is 3-hydroxybutyryl-CoA dehydrogenase (hbd), found in Clostridioides difficile (Peptoclostridium difficile).